We begin with the raw amino-acid sequence, 730 residues long: Dual function macrocyclase-peptidase POPB (730 aa).

Residues 1–34 are disordered; the sequence is MSSVTWAPGNYPSTRRSDHVDTYQSASKGEVPVP. Catalysis depends on charge relay system residues Ser-577, Asp-661, and His-698.

The protein belongs to the peptidase S9A family. In terms of assembly, monomer.

It catalyses the reaction Hydrolysis of Pro-|-Xaa &gt;&gt; Ala-|-Xaa in oligopeptides.. In terms of biological role, dual function macrocyclase-peptidase involved in the biosynthesis of the highly toxic amanitin toxin family of macrocycles. Cleaves peptide bonds on the C-terminal side of prolyl residues. The enzyme first removes 10 residues from the N-terminus of a 35-residue substrate. Conformational trapping of the 25 amino-acid peptide forces the enzyme to release this intermediate rather than proceed to macrocyclization. The enzyme rebinds the 25 amino-acid peptide in a different conformation and catalyzes macrocyclization of the N-terminal eight residues. The chain is Dual function macrocyclase-peptidase POPB from Galerina marginata (strain CBS 339.88).